Reading from the N-terminus, the 90-residue chain is Small ribosomal subunit protein bS18 (90 aa).

Belongs to the bacterial ribosomal protein bS18 family. Part of the 30S ribosomal subunit. Forms a tight heterodimer with protein bS6.

Binds as a heterodimer with protein bS6 to the central domain of the 16S rRNA, where it helps stabilize the platform of the 30S subunit. The protein is Small ribosomal subunit protein bS18 of Bacteroides fragilis (strain YCH46).